The sequence spans 165 residues: Cytochrome b6-f complex subunit 4 (165 aa).

Transmembrane regions (helical) follow at residues leucine 36–valine 56, leucine 95–glutamate 115, and threonine 131–isoleucine 151.

It belongs to the cytochrome b family. PetD subfamily. As to quaternary structure, the 4 large subunits of the cytochrome b6-f complex are cytochrome b6, subunit IV (17 kDa polypeptide, petD), cytochrome f and the Rieske protein, while the 4 small subunits are petG, petL, petM and petN. The complex functions as a dimer.

Its subcellular location is the plastid. It localises to the chloroplast thylakoid membrane. In terms of biological role, component of the cytochrome b6-f complex, which mediates electron transfer between photosystem II (PSII) and photosystem I (PSI), cyclic electron flow around PSI, and state transitions. The sequence is that of Cytochrome b6-f complex subunit 4 from Populus alba (White poplar).